The following is a 348-amino-acid chain: MTTALEPEDQKGLLIIKAEDHYWGQDSSSQKCSPHRRELYRQHFRKLCYQDAPGPREALTQLWELCRQWLRPECHTKEQILDLLVLEQFLSILPKDLQAWVRAHHPETGEEAVTVLEDLERELDEPGKQVPGNSERRDILMDKLAPLGRPYESLTVQLHPKKTQLEQEAGKPQRNGDKTRTKNEELFQKEDMPKDKEFLGEINDRLNKDTPQHPKSKDIIENEGRSEWQQRERRRYKCDECGKSFSHSSDLSKHRRTHTGEKPYKCDECGKAFIQRSHLIGHHRVHTGVKPYKCKECGKDFSGRTGLIQHQRIHTGEKPYECDECGRPFRVSSALIRHQRIHTANKLY.

The 83-residue stretch at Arg-41–Leu-123 folds into the SCAN box domain. Disordered stretches follow at residues Pro-160 to Glu-184 and Arg-205 to Ser-226. The segment covering Thr-163 to Glu-184 has biased composition (basic and acidic residues). C2H2-type zinc fingers lie at residues Tyr-236–His-258, Tyr-264–His-286, Tyr-292–His-314, and Tyr-320–His-342.

The protein belongs to the krueppel C2H2-type zinc-finger protein family.

Its subcellular location is the nucleus. Functionally, may be involved in transcriptional regulation. This chain is Zinc finger and SCAN domain-containing protein 16 (ZSCAN16), found in Homo sapiens (Human).